The chain runs to 155 residues: Endoribonuclease YbeY (155 aa).

Residues His-113, His-117, and His-123 each coordinate Zn(2+).

It belongs to the endoribonuclease YbeY family. Zn(2+) is required as a cofactor.

The protein localises to the cytoplasm. Functionally, single strand-specific metallo-endoribonuclease involved in late-stage 70S ribosome quality control and in maturation of the 3' terminus of the 16S rRNA. The sequence is that of Endoribonuclease YbeY from Ureaplasma parvum serovar 3 (strain ATCC 27815 / 27 / NCTC 11736).